The sequence spans 606 residues: Elongation factor 4 (606 aa).

Positions 10 to 192 (ENIRNFSIIA…AIVQQLPAPK (183 aa)) constitute a tr-type G domain. Residues 22–27 (DHGKST) and 139–142 (NKID) contribute to the GTP site.

It belongs to the TRAFAC class translation factor GTPase superfamily. Classic translation factor GTPase family. LepA subfamily.

It localises to the cell membrane. It catalyses the reaction GTP + H2O = GDP + phosphate + H(+). Required for accurate and efficient protein synthesis under certain stress conditions. May act as a fidelity factor of the translation reaction, by catalyzing a one-codon backward translocation of tRNAs on improperly translocated ribosomes. Back-translocation proceeds from a post-translocation (POST) complex to a pre-translocation (PRE) complex, thus giving elongation factor G a second chance to translocate the tRNAs correctly. Binds to ribosomes in a GTP-dependent manner. The sequence is that of Elongation factor 4 from Lawsonia intracellularis (strain PHE/MN1-00).